The chain runs to 388 residues: Succinate--CoA ligase [ADP-forming] subunit beta (388 aa).

In terms of domain architecture, ATP-grasp spans 9 to 244; that stretch reads KQLFAEYGLP…PSQDDPREAH (236 aa). ATP is bound by residues K46, 53-55, E99, T102, and E107; that span reads GRG. Mg(2+) is bound by residues N199 and D213. Substrate contacts are provided by residues N264 and 321–323; that span reads GIV.

The protein belongs to the succinate/malate CoA ligase beta subunit family. In terms of assembly, heterotetramer of two alpha and two beta subunits. It depends on Mg(2+) as a cofactor.

It carries out the reaction succinate + ATP + CoA = succinyl-CoA + ADP + phosphate. The enzyme catalyses GTP + succinate + CoA = succinyl-CoA + GDP + phosphate. It participates in carbohydrate metabolism; tricarboxylic acid cycle; succinate from succinyl-CoA (ligase route): step 1/1. Functionally, succinyl-CoA synthetase functions in the citric acid cycle (TCA), coupling the hydrolysis of succinyl-CoA to the synthesis of either ATP or GTP and thus represents the only step of substrate-level phosphorylation in the TCA. The beta subunit provides nucleotide specificity of the enzyme and binds the substrate succinate, while the binding sites for coenzyme A and phosphate are found in the alpha subunit. The protein is Succinate--CoA ligase [ADP-forming] subunit beta of Pseudomonas syringae pv. syringae (strain B728a).